Reading from the N-terminus, the 379-residue chain is Putative zinc metalloprotease BMEI0829 (379 aa).

Zn(2+) is bound at residue H33. The active site involves E34. Position 37 (H37) interacts with Zn(2+). Transmembrane regions (helical) follow at residues 39–61, 122–144, 305–327, and 355–377; these read LVAR…ELLG, VFAG…FALY, FDWL…LFPL, and IFYR…NDLF. Residues 133–208 enclose the PDZ domain; the sequence is TIAIFSVFFA…LNFTVERDGK (76 aa).

The protein belongs to the peptidase M50B family. Zn(2+) serves as cofactor.

The protein resides in the cell inner membrane. The polypeptide is Putative zinc metalloprotease BMEI0829 (Brucella melitensis biotype 1 (strain ATCC 23456 / CCUG 17765 / NCTC 10094 / 16M)).